The following is a 361-amino-acid chain: Protein C42 (361 aa).

The tract at residues 32–36 is LXCXE motif; it reads LLCDE. The Nuclear localization signal motif lies at 357 to 360; sequence KRKK.

It belongs to the baculoviridae C42 protein family. As to quaternary structure, forms a complex with proteins E27 and p78/83. The interaction with p78/83 mediates nuclear translocation of P78/83. Interacts with protein Ac102. Interacts with IE0.

Its subcellular location is the host nucleus. It is found in the virion. In terms of biological role, plays a role in host nuclear actin polymerization by recruiting p78/73 protein that is capable of activating an actin-related protein 2/3 complex to initiate nuclear actin polymerization. This Lepidoptera (butterflies and moths) protein is Protein C42.